Here is a 316-residue protein sequence, read N- to C-terminus: Secreted effector protein SifB (316 aa).

It belongs to the Sif family.

It is found in the secreted. The protein localises to the host cytoplasm. Effector proteins function to alter host cell physiology and promote bacterial survival in host tissues. In Salmonella typhimurium (strain LT2 / SGSC1412 / ATCC 700720), this protein is Secreted effector protein SifB (sifB).